The primary structure comprises 166 residues: NADPH-dependent 7-cyano-7-deazaguanine reductase (166 aa).

Catalysis depends on cysteine 57, which acts as the Thioimide intermediate. Aspartate 64 serves as the catalytic Proton donor. Substrate contacts are provided by residues 79 to 81 (VES) and 98 to 99 (HE).

The protein belongs to the GTP cyclohydrolase I family. QueF type 1 subfamily.

The protein localises to the cytoplasm. It carries out the reaction 7-aminomethyl-7-carbaguanine + 2 NADP(+) = 7-cyano-7-deazaguanine + 2 NADPH + 3 H(+). The protein operates within tRNA modification; tRNA-queuosine biosynthesis. Functionally, catalyzes the NADPH-dependent reduction of 7-cyano-7-deazaguanine (preQ0) to 7-aminomethyl-7-deazaguanine (preQ1). The polypeptide is NADPH-dependent 7-cyano-7-deazaguanine reductase (Staphylococcus aureus (strain JH1)).